The sequence spans 227 residues: Superoxide dismutase [Cu-Zn] (227 aa).

An N-terminal signal peptide occupies residues 1–19 (MPKLLPPVVLAGCVVALGA). A lipid anchor (N-palmitoyl cysteine) is attached at Cys20. Cys20 is lipidated: S-diacylglycerol cysteine. The interval 23-55 (PQHASSLPGTTPAVWTGSPSPSGAGAAEAAPAA) is disordered. The segment covering 39–55 (GSPSPSGAGAAEAAPAA) has biased composition (low complexity). Residues His103 and His105 each coordinate Cu cation. The cysteines at positions 110 and 221 are disulfide-linked. Asp145 contacts Zn(2+). His182 contacts Cu cation.

It belongs to the Cu-Zn superoxide dismutase family. Cu cation serves as cofactor. Requires Zn(2+) as cofactor.

Its subcellular location is the cell membrane. It carries out the reaction 2 superoxide + 2 H(+) = H2O2 + O2. Its function is as follows. Destroys radicals which are normally produced within the cells and which are toxic to biological systems. May play a role in favoring mycobacterial survival in phagocytes. This chain is Superoxide dismutase [Cu-Zn] (sodC), found in Mycolicibacterium paratuberculosis (strain ATCC BAA-968 / K-10) (Mycobacterium paratuberculosis).